Reading from the N-terminus, the 142-residue chain is Putative pre-16S rRNA nuclease (142 aa).

It belongs to the YqgF nuclease family.

The protein resides in the cytoplasm. Could be a nuclease involved in processing of the 5'-end of pre-16S rRNA. In Staphylococcus aureus (strain JH1), this protein is Putative pre-16S rRNA nuclease.